Here is a 250-residue protein sequence, read N- to C-terminus: DNA polymerase sliding clamp (250 aa).

Belongs to the PCNA family. In terms of assembly, homotrimer. The subunits circularize to form a toroid; DNA passes through its center. Replication factor C (RFC) is required to load the toroid on the DNA.

Its function is as follows. Sliding clamp subunit that acts as a moving platform for DNA processing. Responsible for tethering the catalytic subunit of DNA polymerase and other proteins to DNA during high-speed replication. In Methanococcus maripaludis (strain C5 / ATCC BAA-1333), this protein is DNA polymerase sliding clamp.